The following is a 221-amino-acid chain: uncharacterized protein (221 aa).

A disordered region spans residues 1–30; that stretch reads MVPPNPAHQPARRTQPQLQPQSQPRAQPLP. The segment covering 12–25 has biased composition (polar residues); sequence RRTQPQLQPQSQPR. Residues 37–57 traverse the membrane as a helical segment; the sequence is VLCIIVALVLLGLLVGLAILI.

The protein localises to the membrane. This is an uncharacterized protein from Arabidopsis thaliana (Mouse-ear cress).